We begin with the raw amino-acid sequence, 75 residues long: Carwaprin-b (75 aa).

The N-terminal stretch at 1 to 24 is a signal peptide; the sequence is MSSGGLLLLLGLLTLWAELTPVSS. The region spanning 27-72 is the WAP domain; that stretch reads RPKKPGLCPPRPQKPPCVRECKNDWRCPGEQKCCRYGCIYECRDPI. 4 disulfides stabilise this stretch: Cys34–Cys60, Cys43–Cys64, Cys47–Cys59, and Cys53–Cys68.

This sequence belongs to the venom waprin family. As to expression, expressed by the venom gland.

The protein resides in the secreted. Its function is as follows. Damages membranes of susceptible bacteria. Has no hemolytic activity. Not toxic to mice. Does not inhibit the proteinases elastase and cathepsin G. In Tropidechis carinatus (Australian rough-scaled snake), this protein is Carwaprin-b.